The chain runs to 384 residues: Involucrin (384 aa).

The disordered stretch occupies residues 1-384 (MSQQHTLPVT…LPEQPQEPEV (384 aa)). Composition is skewed to basic and acidic residues over residues 56-65 (PSKHEEKGTD) and 80-134 (PELH…ELHL). Over residues 137–146 (QQQQESQEQE) the composition is skewed to low complexity. Residues 179–208 (KQREPQESQEQRLHLGKEQESQEQRLHLGE) show a composition bias toward basic and acidic residues. Residues 239–267 (PEQRLQLLPQGPQEQELHLGKQQQQQESQ) are compositionally biased toward low complexity. 2 stretches are compositionally biased toward basic and acidic residues: residues 268–308 (QHQE…KKLL) and 315–336 (EAVK…KEQL).

This sequence belongs to the involucrin family. In terms of assembly, directly or indirectly cross-linked to cornifelin (CNFN). In terms of processing, substrate of transglutaminase. Specific glutamines or lysines are cross-linked to keratins, desmoplakin and to inter involucrin molecules. In terms of tissue distribution, keratinocytes of epidermis and other stratified squamous epithelia.

Its subcellular location is the cytoplasm. Part of the insoluble cornified cell envelope (CE) of stratified squamous epithelia. The chain is Involucrin (IVL) from Otolemur crassicaudatus (Brown greater galago).